The sequence spans 272 residues: uncharacterized protein (272 aa).

This is an uncharacterized protein from Archaeoglobus fulgidus (strain ATCC 49558 / DSM 4304 / JCM 9628 / NBRC 100126 / VC-16).